The primary structure comprises 419 residues: MWAGRVLHAALSRAPRESRAQSALAQLRGILEEELESIRGAGTWKSERVITSRQGPHIHVDGAPGGIINFCANNYLGLSSHPEVIQAGLRTLKEFGAGLSSVRFICGTQSIHKDLEAKIARFHQREDAILYPSCFDANTGLFEALLTSEDAVLSDELNHASIIDGIRLCKAHKYRYRHLDMADLEAKLQEAQKHRLRLVATDGAFSMDGDIAPLQEICRLASQYGALVFVDESHATGFLGATGRGTDELLGVMDQVTIINSTLGKALGGASGGYTTGPGALVSLLRQRARPYLFSNSLPPAAVGCASKALDLLMESNAIVQSMAAKTLRFRSQMEAAGFTISGANHPICPVMLGDARLALNIADDMLKRGIFVIGFSYPVVPKGKARIRVQISAVHSEEDIDRCVEAFVEVGRLHGALP.

The N-terminal 21 residues, 1 to 21, are a transit peptide targeting the mitochondrion; that stretch reads MWAGRVLHAALSRAPRESRAQ. N6-acetyllysine; alternate is present on Lys45. Lys45 carries the N6-succinyllysine; alternate modification. 134–135 contributes to the pyridoxal 5'-phosphate binding site; the sequence is CF. His159 is a binding site for substrate. N6-acetyllysine; alternate is present on Lys187. Lys187 is modified (N6-succinyllysine; alternate). Pyridoxal 5'-phosphate contacts are provided by residues Ser206, 231–234, 262–265, and 295–296; these read DESH, TLGK, and SN. Lys265 carries the N6-(pyridoxal phosphate)lysine modification. An N6-succinyllysine mark is found at Lys326 and Lys368. An N6-acetyllysine; alternate modification is found at Lys383. N6-succinyllysine; alternate is present on Lys383. Arg389 is a binding site for substrate.

This sequence belongs to the class-II pyridoxal-phosphate-dependent aminotransferase family. The cofactor is pyridoxal 5'-phosphate.

It localises to the mitochondrion. The protein resides in the nucleus. The catalysed reaction is glycine + acetyl-CoA = (2S)-2-amino-3-oxobutanoate + CoA. It functions in the pathway amino-acid degradation; L-threonine degradation via oxydo-reductase pathway; glycine from L-threonine: step 2/2. Its function is as follows. Pyridoxal phosphate (PLP) dependent enzyme, which catalyzes the cleavage of 2-amino-3-oxobutanoate to glycine and acetyl-CoA. Catalyzes the second reaction step on the main metabolic degradation pathway for L-threonine. The sequence is that of 2-amino-3-ketobutyrate coenzyme A ligase, mitochondrial (GCAT) from Bos taurus (Bovine).